The sequence spans 254 residues: 3-deoxy-manno-octulosonate cytidylyltransferase (254 aa).

The protein belongs to the KdsB family.

The protein resides in the cytoplasm. The enzyme catalyses 3-deoxy-alpha-D-manno-oct-2-ulosonate + CTP = CMP-3-deoxy-beta-D-manno-octulosonate + diphosphate. It participates in nucleotide-sugar biosynthesis; CMP-3-deoxy-D-manno-octulosonate biosynthesis; CMP-3-deoxy-D-manno-octulosonate from 3-deoxy-D-manno-octulosonate and CTP: step 1/1. It functions in the pathway bacterial outer membrane biogenesis; lipopolysaccharide biosynthesis. Activates KDO (a required 8-carbon sugar) for incorporation into bacterial lipopolysaccharide in Gram-negative bacteria. This Bordetella bronchiseptica (strain ATCC BAA-588 / NCTC 13252 / RB50) (Alcaligenes bronchisepticus) protein is 3-deoxy-manno-octulosonate cytidylyltransferase.